Consider the following 357-residue polypeptide: 3-dehydroquinate synthase (357 aa).

NAD(+)-binding positions include 126–127, K139, and K148; that span reads TT. E181, H244, and H261 together coordinate Zn(2+).

Belongs to the sugar phosphate cyclases superfamily. Dehydroquinate synthase family. Co(2+) serves as cofactor. Requires Zn(2+) as cofactor. NAD(+) is required as a cofactor.

Its subcellular location is the cytoplasm. It carries out the reaction 7-phospho-2-dehydro-3-deoxy-D-arabino-heptonate = 3-dehydroquinate + phosphate. The protein operates within metabolic intermediate biosynthesis; chorismate biosynthesis; chorismate from D-erythrose 4-phosphate and phosphoenolpyruvate: step 2/7. Its function is as follows. Catalyzes the conversion of 3-deoxy-D-arabino-heptulosonate 7-phosphate (DAHP) to dehydroquinate (DHQ). This Solibacter usitatus (strain Ellin6076) protein is 3-dehydroquinate synthase.